The following is a 543-amino-acid chain: Thiamine transport system permease protein ThiP (543 aa).

A run of 12 helical transmembrane segments spans residues 19–39 (VAGGLALAFLATLAGGALLAL), 64–84 (FTIWQAVASSLLSVLFAIPIA), 102–122 (LFALPLALPALVAVLGVTSIY), 142–162 (DIYGIAGILIAHIFFNMPLAV), 205–225 (GMIGLVFMLCVTSFTTVLTLG), 250–270 (AVALTFTQLALTLLILLILRL), 300–320 (IIVIALGFLYVALPIAGVVVS), 343–363 (LALGFSAALLAVFLSLALVAA), 379–399 (GASLILVMPPIVIGAGWFILL), 406–426 (FVMAPLMVVTVNAAMAMPFAV), 468–488 (GMAFAFAMALSLGDLGTIALF), and 510–530 (FDAAGLALILGVLCLALMMIA). Residues 62–266 (ARFTIWQAVA…QLALTLLILL (205 aa)) form the ABC transmembrane type-1 1 domain. Positions 339-530 (IATSLALGFS…VLCLALMMIA (192 aa)) constitute an ABC transmembrane type-1 2 domain.

The protein belongs to the binding-protein-dependent transport system permease family. CysTW subfamily. The complex is composed of two ATP-binding proteins (ThiQ), two transmembrane proteins (ThiP) and a solute-binding protein (ThiB).

It is found in the cell inner membrane. Its function is as follows. Part of the ABC transporter complex ThiBPQ involved in thiamine import. Probably responsible for the translocation of the substrate across the membrane. In Brucella abortus (strain 2308), this protein is Thiamine transport system permease protein ThiP (thiP).